We begin with the raw amino-acid sequence, 447 residues long: Na(+)-translocating NADH-quinone reductase subunit A (447 aa).

Belongs to the NqrA family. In terms of assembly, composed of six subunits; NqrA, NqrB, NqrC, NqrD, NqrE and NqrF.

The enzyme catalyses a ubiquinone + n Na(+)(in) + NADH + H(+) = a ubiquinol + n Na(+)(out) + NAD(+). NQR complex catalyzes the reduction of ubiquinone-1 to ubiquinol by two successive reactions, coupled with the transport of Na(+) ions from the cytoplasm to the periplasm. NqrA to NqrE are probably involved in the second step, the conversion of ubisemiquinone to ubiquinol. This chain is Na(+)-translocating NADH-quinone reductase subunit A, found in Tolumonas auensis (strain DSM 9187 / NBRC 110442 / TA 4).